The sequence spans 186 residues: Ribosome-recycling factor (186 aa).

The segment at 144–163 (EKDGVIGQDESRAQSERVQK) is disordered.

The protein belongs to the RRF family.

It is found in the cytoplasm. Its function is as follows. Responsible for the release of ribosomes from messenger RNA at the termination of protein biosynthesis. May increase the efficiency of translation by recycling ribosomes from one round of translation to another. This is Ribosome-recycling factor from Rhizobium johnstonii (strain DSM 114642 / LMG 32736 / 3841) (Rhizobium leguminosarum bv. viciae).